Reading from the N-terminus, the 264-residue chain is Cell cycle regulator CcrZ (264 aa).

Residues phenylalanine 32, tryptophan 70, and glycine 73 each contribute to the ATP site. Residues 157–164 (HGDVRHSN) carry the Brenner's motif [HXDhX3N] motif. Aspartate 159 functions as the Proton acceptor in the catalytic mechanism. Positions 173 to 196 (IYLVDWDSVRLTDRMFDVAHMLCH) match the APH motif.

This sequence belongs to the aminoglycoside phosphotransferase family. As to quaternary structure, monomer in solution. Interacts with DnaA (via domains I (1-82) and III (111-326)). Interacts with DnaB. Interacts with FtsZ; the interaction is direct and ensures correct localization during the cell cycle.

The protein resides in the cytoplasm. It catalyses the reaction D-ribose + ATP = D-ribose 5-phosphate + ADP + H(+). The catalysed reaction is 2-deoxy-D-ribose + ATP = 2-deoxy-D-ribose 5-phosphate + ADP + H(+). In terms of biological role, plays a role in cell cycle regulation and chromosome integrity. Activates DnaA-dependent chromosomal DNA replication initiation ensuring that the chromosome is replicated at the right time during the cell cycle. May regulate replication initiation through phosphorylation of a possible second messenger or metabolite, and by interacting with replication initiation proteins. Has ATPase activity with D-ribose and 2-deoxy-D-ribose in vitro, but not with choline. Involved in DNA damage response. The sequence is that of Cell cycle regulator CcrZ from Streptococcus pneumoniae serotype 2 (strain D39 / NCTC 7466).